The sequence spans 293 residues: Large ribosomal subunit protein uL4c (293 aa).

Residues 1 to 50 (MATSTSSSLSLSFFSSSLFSSKSRNFSSKPILKLPSSSHSQTSLSLSIKS) constitute a chloroplast transit peptide. Disordered regions lie at residues 107–138 (EVRG…PGGG) and 259–293 (YGVD…EPAE). A compositionally biased stretch (basic residues) spans 116 to 126 (YPQKKTGRARR). Over residues 263-293 (TLEDEDEEEEEEEEGEEVDDGVEDGTPEPAE) the composition is skewed to acidic residues.

The protein belongs to the universal ribosomal protein uL4 family. Component of the chloroplast large ribosomal subunit (LSU). Mature 70S chloroplast ribosomes of higher plants consist of a small (30S) and a large (50S) subunit. The 30S small subunit contains 1 molecule of ribosomal RNA (16S rRNA) and 24 different proteins. The 50S large subunit contains 3 rRNA molecules (23S, 5S and 4.5S rRNA) and 33 different proteins. In terms of tissue distribution, highly expressed in cotyledon and weakly in roots.

The protein localises to the plastid. The protein resides in the chloroplast. Component of the chloroplast ribosome (chloro-ribosome), a dedicated translation machinery responsible for the synthesis of chloroplast genome-encoded proteins, including proteins of the transcription and translation machinery and components of the photosynthetic apparatus. The polypeptide is Large ribosomal subunit protein uL4c (RPL4) (Spinacia oleracea (Spinach)).